The sequence spans 411 residues: Floricaula/leafy-like protein (411 aa).

Residues 220–259 (PDTNYGSEQTKACKKQKRRRSKDSGEDGEERQREHPFIVT) are disordered. Basic residues predominate over residues 231-240 (ACKKQKRRRS). Positions 241 to 255 (KDSGEDGEERQREHP) are enriched in basic and acidic residues. DNA-binding regions lie at residues 252–256 (REHPF), 321–328 (NKPKMRHY), and 392–395 (YVPT).

Belongs to the FLO/LFY family. Expressed in vegetative buds and male cones but not in female cones, vascular tissue, roots or secondary needles.

It is found in the nucleus. Probable transcription factor. This chain is Floricaula/leafy-like protein (FLL), found in Pinus radiata (Monterey pine).